The chain runs to 681 residues: Anaphase-promoting complex subunit 2 (681 aa).

Belongs to the cullin family. In terms of assembly, the APC/C is composed of at least 13 subunits: apc1, apc2, nuc2, apc4, apc5, cut9, apc8, apc10, apc11, hcn1, apc13, apc14 and apc15.

Component of the anaphase-promoting complex/cyclosome (APC/C), a cell cycle-regulated E3 ubiquitin-protein ligase complex that controls progression through mitosis and the G1 phase of the cell cycle. The APC/C is thought to confer substrate specificity and, in the presence of ubiquitin-conjugating E2 enzymes, it catalyzes the formation of protein-ubiquitin conjugates that are subsequently degraded by the 26S proteasome. This Schizosaccharomyces pombe (strain 972 / ATCC 24843) (Fission yeast) protein is Anaphase-promoting complex subunit 2 (apc2).